A 204-amino-acid polypeptide reads, in one-letter code: Holliday junction branch migration complex subunit RuvA (204 aa).

Residues 1–64 (MIGRLQGILL…EDAHLLFGFS (64 aa)) form a domain I region. Residues 65–143 (AKTDRTLFRE…GIKQPDFFVE (79 aa)) form a domain II region. The interval 144 to 155 (SSHVGAVDPVTT) is flexible linker. Residues 156–204 (SPEVPAEEAVAALMALGYKASDAEKMVKRIAKPHLTSEQLIREALKAAL) form a domain III region.

Belongs to the RuvA family. Homotetramer. Forms an RuvA(8)-RuvB(12)-Holliday junction (HJ) complex. HJ DNA is sandwiched between 2 RuvA tetramers; dsDNA enters through RuvA and exits via RuvB. An RuvB hexamer assembles on each DNA strand where it exits the tetramer. Each RuvB hexamer is contacted by two RuvA subunits (via domain III) on 2 adjacent RuvB subunits; this complex drives branch migration. In the full resolvosome a probable DNA-RuvA(4)-RuvB(12)-RuvC(2) complex forms which resolves the HJ.

The protein localises to the cytoplasm. Functionally, the RuvA-RuvB-RuvC complex processes Holliday junction (HJ) DNA during genetic recombination and DNA repair, while the RuvA-RuvB complex plays an important role in the rescue of blocked DNA replication forks via replication fork reversal (RFR). RuvA specifically binds to HJ cruciform DNA, conferring on it an open structure. The RuvB hexamer acts as an ATP-dependent pump, pulling dsDNA into and through the RuvAB complex. HJ branch migration allows RuvC to scan DNA until it finds its consensus sequence, where it cleaves and resolves the cruciform DNA. This is Holliday junction branch migration complex subunit RuvA from Mannheimia succiniciproducens (strain KCTC 0769BP / MBEL55E).